The following is a 174-amino-acid chain: CDP-archaeol synthase (174 aa).

5 helical membrane-spanning segments follow: residues 14 to 34 (ILEAIILMLPAMIANATPVVA), 59 to 79 (IEGLLAGFAAGSAAGVLAALA), 83 to 103 (MLLAVHSPAIALGALAGDMAG), 118 to 138 (APLLDQLDFYLGALAVSIALG), and 149 to 169 (AAAAVLLLHLAANITAYLLGL).

Belongs to the CDP-archaeol synthase family. Mg(2+) serves as cofactor.

The protein resides in the cell membrane. The enzyme catalyses 2,3-bis-O-(geranylgeranyl)-sn-glycerol 1-phosphate + CTP + H(+) = CDP-2,3-bis-O-(geranylgeranyl)-sn-glycerol + diphosphate. The protein operates within membrane lipid metabolism; glycerophospholipid metabolism. Catalyzes the formation of CDP-2,3-bis-(O-geranylgeranyl)-sn-glycerol (CDP-archaeol) from 2,3-bis-(O-geranylgeranyl)-sn-glycerol 1-phosphate (DGGGP) and CTP. This reaction is the third ether-bond-formation step in the biosynthesis of archaeal membrane lipids. This chain is CDP-archaeol synthase, found in Aeropyrum pernix (strain ATCC 700893 / DSM 11879 / JCM 9820 / NBRC 100138 / K1).